A 462-amino-acid polypeptide reads, in one-letter code: NAD-capped RNA hydrolase NUDT12 (462 aa).

3 ANK repeats span residues 11 to 40 (EIVTQFHCSAAEGDIAKLTGILSHSPSLLN), 45 to 74 (NGWTALMYAARNGHPEIVQFLLEKGCDRSI), and 78 to 98 (SRQTALDIAVFWGYKHIANLL). Lys-185 is modified (N6-succinyllysine). The Zn(2+) site is built by Cys-284 and Cys-287. Lys-292 is subject to N6-succinyllysine. Cys-302 and Cys-307 together coordinate Zn(2+). Substrate is bound by residues Tyr-318, 354–356 (AGF), Glu-370, Glu-374, and Glu-415. Residues 319–453 (PRVDPVVIMQ…SRAIAHQLIK (135 aa)) form the Nudix hydrolase domain. The Mg(2+) site is built by Ala-354, Glu-370, Glu-374, and Glu-415. The short motif at 355 to 376 (GFIEPGETIEDAVRREVEEESG) is the Nudix box element. The short motif at 460 to 462 (PNL) is the Microbody targeting signal element.

This sequence belongs to the Nudix hydrolase family. NudC subfamily. In terms of assembly, homodimer. Homodimerization is essential for its catalytic activity and protein stability. Interacts (via ANK repeats) with BLMH. The cofactor is Mg(2+). Requires Zn(2+) as cofactor.

The protein resides in the cytoplasm. It is found in the peroxisome. Its subcellular location is the cytoplasmic granule. The catalysed reaction is a 5'-end NAD(+)-phospho-ribonucleoside in mRNA + H2O = a 5'-end phospho-adenosine-phospho-ribonucleoside in mRNA + beta-nicotinamide D-ribonucleotide + 2 H(+). It catalyses the reaction NAD(+) + H2O = beta-nicotinamide D-ribonucleotide + AMP + 2 H(+). The enzyme catalyses NADH + H2O = reduced beta-nicotinamide D-ribonucleotide + AMP + 2 H(+). It carries out the reaction NADPH + H2O = reduced beta-nicotinamide D-ribonucleotide + adenosine 2',5'-bisphosphate + 2 H(+). In terms of biological role, mRNA decapping enzyme that specifically removes the nicotinamide adenine dinucleotide (NAD) cap from a subset of mRNAs by hydrolyzing the diphosphate linkage to produce nicotinamide mononucleotide (NMN) and 5' monophosphate mRNA. The NAD-cap is present at the 5'-end of some RNAs; in contrast to the canonical N7 methylguanosine (m7G) cap, the NAD cap promotes mRNA decay. Preferentially acts on NAD-capped transcripts in response to nutrient stress. Also acts on free nicotinamide adenine dinucleotide molecules: hydrolyzes NAD(H) into NMN(H) and AMP, and NADPH into NMNH and 2',5'-ADP. May act to regulate the concentration of peroxisomal nicotinamide nucleotide cofactors required for oxidative metabolism in this organelle. Regulates the levels of circadian clock components PER1, PER2, PER3 and CRY2 in the liver. The sequence is that of NAD-capped RNA hydrolase NUDT12 from Homo sapiens (Human).